A 315-amino-acid polypeptide reads, in one-letter code: Glucokinase-like protein CC_3167 (315 aa).

The protein belongs to the bacterial glucokinase family.

The sequence is that of Glucokinase-like protein CC_3167 from Caulobacter vibrioides (strain ATCC 19089 / CIP 103742 / CB 15) (Caulobacter crescentus).